The sequence spans 1503 residues: EF-hand calcium-binding domain-containing protein 5 (1503 aa).

Positions 1 to 23 are disordered; sequence MNESASQEELRPAQENRKEDKER. The span at 8 to 23 shows a compositional bias: basic and acidic residues; it reads EELRPAQENRKEDKER. Serine 77 is subject to Phosphoserine. Disordered stretches follow at residues 477 to 518, 544 to 656, and 730 to 750; these read ASKT…EQGP, IEPG…QGPY, and FPET…KSQK. The span at 549-561 shows a compositional bias: polar residues; that stretch reads HTESTLEQGSSRR. Composition is skewed to basic and acidic residues over residues 562-582 and 607-622; these read LLTE…HKGS and GSRR…HKGS. The EF-hand domain occupies 869–904; it reads RQRLLLEAIFQKWDSDGSGFLDLKEVDELLYTYKEG. 4 residues coordinate Ca(2+): aspartate 882, aspartate 884, serine 886, and glutamate 893.

This chain is EF-hand calcium-binding domain-containing protein 5 (EFCAB5), found in Homo sapiens (Human).